The chain runs to 198 residues: ATP-dependent Clp protease proteolytic subunit (198 aa).

Catalysis depends on serine 98, which acts as the Nucleophile. The active site involves histidine 123.

This sequence belongs to the peptidase S14 family. Fourteen ClpP subunits assemble into 2 heptameric rings which stack back to back to give a disk-like structure with a central cavity, resembling the structure of eukaryotic proteasomes.

It localises to the cytoplasm. The enzyme catalyses Hydrolysis of proteins to small peptides in the presence of ATP and magnesium. alpha-casein is the usual test substrate. In the absence of ATP, only oligopeptides shorter than five residues are hydrolyzed (such as succinyl-Leu-Tyr-|-NHMec, and Leu-Tyr-Leu-|-Tyr-Trp, in which cleavage of the -Tyr-|-Leu- and -Tyr-|-Trp bonds also occurs).. Its function is as follows. Cleaves peptides in various proteins in a process that requires ATP hydrolysis. Has a chymotrypsin-like activity. Plays a major role in the degradation of misfolded proteins. In Ehrlichia ruminantium (strain Welgevonden), this protein is ATP-dependent Clp protease proteolytic subunit.